Here is a 281-residue protein sequence, read N- to C-terminus: BEN domain-containing protein 6 (281 aa).

Disordered regions lie at residues 15–62 and 143–172; these read VLRK…ETPL and SFASLCSNSNSTSSSPSSVKAEEEQHPGEK. A coiled-coil region spans residues 19 to 99; the sequence is RKRKRTETAN…RLRQSLVMLQ (81 aa). Residues 143–160 are compositionally biased toward low complexity; the sequence is SFASLCSNSNSTSSSPSS. Basic and acidic residues predominate over residues 162 to 172; it reads KAEEEQHPGEK. The BEN domain occupies 171–271; it reads EKQFTIERWQ…NCTKKPNASK (101 aa).

Interacts (via BEN domain) with RBPJ.

The protein localises to the nucleus. Its function is as follows. Acts as a corepressor of recombining binding protein suppressor hairless (RBPJ) and inhibits Notch signaling in neural stem cells, thereby opposing their self-renewal and promoting neurogenesis. The sequence is that of BEN domain-containing protein 6 (Bend6) from Mus musculus (Mouse).